The sequence spans 40 residues: Photosystem II reaction center protein J (40 aa).

The chain crosses the membrane as a helical span at residues 8–28 (IPLWLVATVAGLAAIGVLGIF).

This sequence belongs to the PsbJ family. As to quaternary structure, PSII is composed of 1 copy each of membrane proteins PsbA, PsbB, PsbC, PsbD, PsbE, PsbF, PsbH, PsbI, PsbJ, PsbK, PsbL, PsbM, PsbT, PsbX, PsbY, PsbZ, Psb30/Ycf12, at least 3 peripheral proteins of the oxygen-evolving complex and a large number of cofactors. It forms dimeric complexes.

It localises to the plastid. The protein localises to the cyanelle thylakoid membrane. Functionally, one of the components of the core complex of photosystem II (PSII). PSII is a light-driven water:plastoquinone oxidoreductase that uses light energy to abstract electrons from H(2)O, generating O(2) and a proton gradient subsequently used for ATP formation. It consists of a core antenna complex that captures photons, and an electron transfer chain that converts photonic excitation into a charge separation. The protein is Photosystem II reaction center protein J of Cyanophora paradoxa.